The chain runs to 187 residues: Protein GrpE (187 aa).

Residues 1 to 11 (MTDSSNEHETE) are compositionally biased toward basic and acidic residues. A disordered region spans residues 1 to 21 (MTDSSNEHETENPSLPIPDNE).

Belongs to the GrpE family. Homodimer.

The protein localises to the cytoplasm. In terms of biological role, participates actively in the response to hyperosmotic and heat shock by preventing the aggregation of stress-denatured proteins, in association with DnaK and GrpE. It is the nucleotide exchange factor for DnaK and may function as a thermosensor. Unfolded proteins bind initially to DnaJ; upon interaction with the DnaJ-bound protein, DnaK hydrolyzes its bound ATP, resulting in the formation of a stable complex. GrpE releases ADP from DnaK; ATP binding to DnaK triggers the release of the substrate protein, thus completing the reaction cycle. Several rounds of ATP-dependent interactions between DnaJ, DnaK and GrpE are required for fully efficient folding. This Chlamydia caviae (strain ATCC VR-813 / DSM 19441 / 03DC25 / GPIC) (Chlamydophila caviae) protein is Protein GrpE.